Here is a 645-residue protein sequence, read N- to C-terminus: 1,4-alpha-glucan branching enzyme GlgB (645 aa).

Catalysis depends on Asp-309, which acts as the Nucleophile. The Proton donor role is filled by Glu-352. Residues 619–645 (VKTRKGSKKQDGSKTKVRSNVTSRGKR) form a disordered region. The span at 636–645 (RSNVTSRGKR) shows a compositional bias: polar residues.

Belongs to the glycosyl hydrolase 13 family. GlgB subfamily. Monomer.

It catalyses the reaction Transfers a segment of a (1-&gt;4)-alpha-D-glucan chain to a primary hydroxy group in a similar glucan chain.. It functions in the pathway glycan biosynthesis; glycogen biosynthesis. In terms of biological role, catalyzes the formation of the alpha-1,6-glucosidic linkages in glycogen by scission of a 1,4-alpha-linked oligosaccharide from growing alpha-1,4-glucan chains and the subsequent attachment of the oligosaccharide to the alpha-1,6 position. The chain is 1,4-alpha-glucan branching enzyme GlgB from Bacillus cereus (strain Q1).